A 496-amino-acid chain; its full sequence is MKKNLHPIMLAGTGSDVGKSVIAAALCRIFKQDGYRPAPFKAQNMALNSYATPEGLEIGRAQAVQAEAAGVPCHTDMNPLLLKPSSDHTSQVVLNGRPIGNRNAFEYFRKEGREELRQEVNAAFDRLAARYNPIVMEGAGSISEINLRDTDLVNMPMACYADADVILVADIDRGGVFASVYGSVMLQTPEDKKRIKGVIINKFRGDIRLFESGVKMMEDLCGIPVLGIIPYYRNIHIEEEDSVGLDYKRMQAVEGKINIAVVLLRHLSNFTDFNRLERDERVHLYYTNNTEDLAKADIILLPGSKSTLDDLYELRRNGVAQAVLRAHREGVTVMGICGGYQLMGLEIHDPEGVEGEIRQLPGLGLLPVITTMQGEKVTRQVNFHFLENAETCQGYEIHMGETRPVPGEAVVPLNKLEDGGEDGCFVNQKCMGSYIHGILDNQAFIDYLLEPYAEKLECHTVLDYRTYKEEQYDKLAEHVRSHLNLPLLYQIMSGND.

A GATase cobBQ-type domain is found at Lys-256 to Phe-444. Cys-337 functions as the Nucleophile in the catalytic mechanism. The active site involves His-436.

The protein belongs to the CobB/CobQ family. CobQ subfamily.

The protein operates within cofactor biosynthesis; adenosylcobalamin biosynthesis. Functionally, catalyzes amidations at positions B, D, E, and G on adenosylcobyrinic A,C-diamide. NH(2) groups are provided by glutamine, and one molecule of ATP is hydrogenolyzed for each amidation. In Phocaeicola vulgatus (strain ATCC 8482 / DSM 1447 / JCM 5826 / CCUG 4940 / NBRC 14291 / NCTC 11154) (Bacteroides vulgatus), this protein is Cobyric acid synthase.